A 392-amino-acid chain; its full sequence is O-phospho-L-seryl-tRNA:Cys-tRNA synthase (392 aa).

Residues 85–86, Asn190, and 213–215 contribute to the pyridoxal 5'-phosphate site; these read AR and SGH. N6-(pyridoxal phosphate)lysine is present on Lys216.

This sequence belongs to the SepCysS family. Homodimer. Interacts with SepRS. Pyridoxal 5'-phosphate is required as a cofactor.

The enzyme catalyses O-phospho-L-seryl-tRNA(Cys) + hydrogen sulfide + H(+) = L-cysteinyl-tRNA(Cys) + phosphate. Functionally, converts O-phospho-L-seryl-tRNA(Cys) (Sep-tRNA(Cys)) to L-cysteinyl-tRNA(Cys) (Cys-tRNA(Cys)). This chain is O-phospho-L-seryl-tRNA:Cys-tRNA synthase, found in Methanoculleus marisnigri (strain ATCC 35101 / DSM 1498 / JR1).